Consider the following 600-residue polypeptide: Adenine deaminase 2 (600 aa).

It belongs to the metallo-dependent hydrolases superfamily. Adenine deaminase family. Requires Mn(2+) as cofactor.

The catalysed reaction is adenine + H2O + H(+) = hypoxanthine + NH4(+). This is Adenine deaminase 2 from Bradyrhizobium sp. (strain ORS 278).